The sequence spans 482 residues: Aspartyl/glutamyl-tRNA(Asn/Gln) amidotransferase subunit B (482 aa).

This sequence belongs to the GatB/GatE family. GatB subfamily. As to quaternary structure, heterotrimer of A, B and C subunits.

It carries out the reaction L-glutamyl-tRNA(Gln) + L-glutamine + ATP + H2O = L-glutaminyl-tRNA(Gln) + L-glutamate + ADP + phosphate + H(+). It catalyses the reaction L-aspartyl-tRNA(Asn) + L-glutamine + ATP + H2O = L-asparaginyl-tRNA(Asn) + L-glutamate + ADP + phosphate + 2 H(+). Its function is as follows. Allows the formation of correctly charged Asn-tRNA(Asn) or Gln-tRNA(Gln) through the transamidation of misacylated Asp-tRNA(Asn) or Glu-tRNA(Gln) in organisms which lack either or both of asparaginyl-tRNA or glutaminyl-tRNA synthetases. The reaction takes place in the presence of glutamine and ATP through an activated phospho-Asp-tRNA(Asn) or phospho-Glu-tRNA(Gln). This chain is Aspartyl/glutamyl-tRNA(Asn/Gln) amidotransferase subunit B, found in Thermotoga petrophila (strain ATCC BAA-488 / DSM 13995 / JCM 10881 / RKU-1).